Consider the following 148-residue polypeptide: SUMO-conjugating enzyme UBC9 (148 aa).

Positions M1–M147 constitute a UBC core domain. C85 acts as the Glycyl thioester intermediate in catalysis.

Belongs to the ubiquitin-conjugating enzyme family. As to quaternary structure, interacts with CHIP. In terms of tissue distribution, highest expression in young stems and old leaves. Lowest levels in floral buds, anthers and young leaves.

Its pathway is protein modification; protein sumoylation. Accepts the ubiquitin-like protein SUMO/SMT3 from the E1 complex and catalyzes its covalent attachment to other proteins. Mediates the selective degradation of short-lived and abnormal proteins. This chain is SUMO-conjugating enzyme UBC9 (UBC9), found in Arabidopsis thaliana (Mouse-ear cress).